The sequence spans 101 residues: NAD(P)H-quinone oxidoreductase subunit 4L, chloroplastic (101 aa).

Transmembrane regions (helical) follow at residues 2–22 (MLEH…FGLI), 32–52 (MCLE…SHLF), and 61–81 (IFSI…LAIV).

It belongs to the complex I subunit 4L family. In terms of assembly, NDH is composed of at least 16 different subunits, 5 of which are encoded in the nucleus.

The protein localises to the plastid. Its subcellular location is the chloroplast thylakoid membrane. The catalysed reaction is a plastoquinone + NADH + (n+1) H(+)(in) = a plastoquinol + NAD(+) + n H(+)(out). It catalyses the reaction a plastoquinone + NADPH + (n+1) H(+)(in) = a plastoquinol + NADP(+) + n H(+)(out). Functionally, NDH shuttles electrons from NAD(P)H:plastoquinone, via FMN and iron-sulfur (Fe-S) centers, to quinones in the photosynthetic chain and possibly in a chloroplast respiratory chain. The immediate electron acceptor for the enzyme in this species is believed to be plastoquinone. Couples the redox reaction to proton translocation, and thus conserves the redox energy in a proton gradient. The chain is NAD(P)H-quinone oxidoreductase subunit 4L, chloroplastic from Piper cenocladum (Ant piper).